Consider the following 59-residue polypeptide: Large ribosomal subunit protein uL30 (59 aa).

This sequence belongs to the universal ribosomal protein uL30 family. In terms of assembly, part of the 50S ribosomal subunit.

This chain is Large ribosomal subunit protein uL30, found in Listeria innocua serovar 6a (strain ATCC BAA-680 / CLIP 11262).